The primary structure comprises 228 residues: Cytidylate kinase (228 aa).

Residue 17–25 coordinates ATP; sequence GPTASGKGT.

Belongs to the cytidylate kinase family. Type 1 subfamily.

It localises to the cytoplasm. The enzyme catalyses CMP + ATP = CDP + ADP. The catalysed reaction is dCMP + ATP = dCDP + ADP. In Burkholderia mallei (strain NCTC 10247), this protein is Cytidylate kinase.